The following is a 490-amino-acid chain: MAAAAVARAVLFSAARRRLCGFTERLLIGGAAGRSLYFGGNRLRSTQAAAQVVLNVPETRVTCLENGLRVASEDSGLATCTVGLWIDAGSRYENEKNNGTAHFLEHMAFKGTKKRSQLDLELEIENMGAHLNAYTSREQTVYYAKAFSKDLPRAVEILADIIQNSTLGEAEIERERGVILREMQEVETNLQEVVFDYLHATAYQNTALGRTILGPTENIKSINRKDLVDYITTHYKGPRIVLAAAGGVSHDELLELAKFHFGESLSTHKGEIPALPPCKFTGSEIRVRDDKMPLAHLAVAVEAVGWAHPDTICLMVANTLIGNWDRSFGGGMNLSSKLAQLTCHGNLCHSFQSFNTSYTDTGLWGIYMVCEPATVADMLHVVQKEWMRLCTSVTESEVARAKNLLKTNMLLQLDGSTPICEDIGRQMLCYNRRIPIPELEARIDAVNAEIIREVCTKYIYDKSPAVAAVGPIEQLPDFNQICSNMRWLHD.

The transit peptide at 1-46 (MAAAAVARAVLFSAARRRLCGFTERLLIGGAAGRSLYFGGNRLRST) directs the protein to the mitochondrion. His-102 serves as a coordination point for Zn(2+). Glu-105 acts as the Proton acceptor in catalysis. His-106 and Glu-182 together coordinate Zn(2+).

The protein belongs to the peptidase M16 family. Heterodimer of PMPCA (alpha) and PMPCB (beta) subunits, forming the mitochondrial processing protease (MPP) in which PMPCA is involved in substrate recognition and binding and PMPCB is the catalytic subunit. It depends on Zn(2+) as a cofactor.

It is found in the mitochondrion matrix. The enzyme catalyses Release of N-terminal transit peptides from precursor proteins imported into the mitochondrion, typically with Arg in position P2.. Its activity is regulated as follows. Binding to PMPCA is required for catalytic activity. Catalytic subunit of the essential mitochondrial processing protease (MPP), which cleaves the mitochondrial sequence off newly imported precursors proteins. Preferentially, cleaves after an arginine at position P2. Required for PINK1 turnover by coupling PINK1 mitochondrial import and cleavage, which results in subsequent PINK1 proteolysis. This chain is Mitochondrial-processing peptidase subunit beta (PMPCB), found in Bos taurus (Bovine).